Consider the following 184-residue polypeptide: ATP synthase subunit delta (184 aa).

This sequence belongs to the ATPase delta chain family. As to quaternary structure, F-type ATPases have 2 components, F(1) - the catalytic core - and F(0) - the membrane proton channel. F(1) has five subunits: alpha(3), beta(3), gamma(1), delta(1), epsilon(1). CF(0) has four main subunits: a(1), b(1), b'(1) and c(10-14). The alpha and beta chains form an alternating ring which encloses part of the gamma chain. F(1) is attached to F(0) by a central stalk formed by the gamma and epsilon chains, while a peripheral stalk is formed by the delta, b and b' chains.

The protein resides in the cell inner membrane. In terms of biological role, f(1)F(0) ATP synthase produces ATP from ADP in the presence of a proton or sodium gradient. F-type ATPases consist of two structural domains, F(1) containing the extramembraneous catalytic core and F(0) containing the membrane proton channel, linked together by a central stalk and a peripheral stalk. During catalysis, ATP synthesis in the catalytic domain of F(1) is coupled via a rotary mechanism of the central stalk subunits to proton translocation. Functionally, this protein is part of the stalk that links CF(0) to CF(1). It either transmits conformational changes from CF(0) to CF(1) or is implicated in proton conduction. The sequence is that of ATP synthase subunit delta from Erythrobacter litoralis (strain HTCC2594).